Consider the following 663-residue polypeptide: Fructose-1,6-bisphosphatase class 3 1 (663 aa).

This sequence belongs to the FBPase class 3 family. Mn(2+) is required as a cofactor.

The enzyme catalyses beta-D-fructose 1,6-bisphosphate + H2O = beta-D-fructose 6-phosphate + phosphate. It functions in the pathway carbohydrate biosynthesis; gluconeogenesis. The protein is Fructose-1,6-bisphosphatase class 3 1 of Clostridium beijerinckii (strain ATCC 51743 / NCIMB 8052) (Clostridium acetobutylicum).